We begin with the raw amino-acid sequence, 400 residues long: Outer membrane protein alpha (400 aa).

Residues 1 to 20 (MKRVLLTVAMLSVFFSAMFA) form the signal peptide. An SLH domain is found at 21–81 (FFPDVPKDHW…DFIEQKMLAG (61 aa)). Positions 85–379 (DLAQVVGNLS…ESVKAYNRNL (295 aa)) form a coiled coil. 3 tandem repeats follow at residues 208-232 (VNLHEKDIINIYNKISSVNEELNNK), 251-275 (VELHEKDIINLYNKVAALNEDLNKK), and 326-350 (VDLHEQDIVNLYGKTSSLEEDLNMK). The interval 208 to 350 (VNLHEKDIIN…SSLEEDLNMK (143 aa)) is 3 X 25 AA approximate repeat. Residues 380–400 (SILTGAFFGILGLILIAISGK) traverse the membrane as a helical segment.

Homotetramer.

The protein resides in the cell outer membrane. Functionally, links the outer membrane to the inner membrane. Long fibrous protein that could serve to separate the two membranes. This is Outer membrane protein alpha (omp-alpha) from Thermotoga maritima (strain ATCC 43589 / DSM 3109 / JCM 10099 / NBRC 100826 / MSB8).